We begin with the raw amino-acid sequence, 242 residues long: Probable 2-phosphosulfolactate phosphatase (242 aa).

The protein belongs to the ComB family. The cofactor is Mg(2+).

The enzyme catalyses (2R)-O-phospho-3-sulfolactate + H2O = (2R)-3-sulfolactate + phosphate. This is Probable 2-phosphosulfolactate phosphatase from Prochlorococcus marinus (strain NATL1A).